The sequence spans 208 residues: Imidazoleglycerol-phosphate dehydratase (208 aa).

It belongs to the imidazoleglycerol-phosphate dehydratase family.

Its subcellular location is the cytoplasm. The catalysed reaction is D-erythro-1-(imidazol-4-yl)glycerol 3-phosphate = 3-(imidazol-4-yl)-2-oxopropyl phosphate + H2O. It participates in amino-acid biosynthesis; L-histidine biosynthesis; L-histidine from 5-phospho-alpha-D-ribose 1-diphosphate: step 6/9. This chain is Imidazoleglycerol-phosphate dehydratase, found in Pseudarthrobacter chlorophenolicus (strain ATCC 700700 / DSM 12829 / CIP 107037 / JCM 12360 / KCTC 9906 / NCIMB 13794 / A6) (Arthrobacter chlorophenolicus).